Consider the following 375-residue polypeptide: Protein arginine N-methyltransferase 6 (375 aa).

Residues 1–36 (MSQPKRRKLESGGGGEGGEGTEEEDGGELEVAVPRP) are disordered. The span at 19 to 28 (EGTEEEDGGE) shows a compositional bias: acidic residues. Threonine 21 is subject to Phosphothreonine. Arginine 38 carries the post-translational modification Asymmetric dimethylarginine; by autocatalysis. The SAM-dependent MTase PRMT-type domain maps to 44–374 (DQLYYQCYSD…EEKTKDFAME (331 aa)). Residues histidine 57, arginine 66, glycine 90, glutamate 112, and glutamate 141 each contribute to the S-adenosyl-L-methionine site. Residues glutamate 155 and glutamate 164 contribute to the active site.

The protein belongs to the class I-like SAM-binding methyltransferase superfamily. Protein arginine N-methyltransferase family. PRMT6 subfamily. As to quaternary structure, interacts with (and methylates) HIV-1 Tat, Rev and Nucleocapsid protein p7 (NC). Interacts with EPB41L3 and NCOA1. Automethylation enhances its stability.

It localises to the nucleus. The enzyme catalyses L-arginyl-[protein] + 2 S-adenosyl-L-methionine = N(omega),N(omega)-dimethyl-L-arginyl-[protein] + 2 S-adenosyl-L-homocysteine + 2 H(+). Its function is as follows. Arginine methyltransferase that can catalyze the formation of both omega-N monomethylarginine (MMA) and asymmetrical dimethylarginine (aDMA), with a strong preference for the formation of aDMA. Preferentially methylates arginyl residues present in a glycine and arginine-rich domain and displays preference for monomethylated substrates. Specifically mediates the asymmetric dimethylation of histone H3 'Arg-2' to form H3R2me2a. H3R2me2a represents a specific tag for epigenetic transcriptional repression and is mutually exclusive with methylation on histone H3 'Lys-4' (H3K4me2 and H3K4me3). Acts as a transcriptional repressor of various genes such as HOXA2, THBS1 and TP53. Repression of TP53 blocks cellular senescence. Also methylates histone H2A and H4 'Arg-3' (H2AR3me and H4R3me, respectively). Acts as a regulator of DNA base excision during DNA repair by mediating the methylation of DNA polymerase beta (POLB), leading to the stimulation of its polymerase activity by enhancing DNA binding and processivity. Methylates HMGA1. Regulates alternative splicing events. Acts as a transcriptional coactivator of a number of steroid hormone receptors including ESR1, ESR2, PGR and NR3C1. Promotes fasting-induced transcriptional activation of the gluconeogenic program through methylation of the CRTC2 transcription coactivator. Methylates GPS2, protecting GPS2 from ubiquitination and degradation. Methylates SIRT7, inhibiting SIRT7 histone deacetylase activity and promoting mitochondria biogenesis. The sequence is that of Protein arginine N-methyltransferase 6 (PRMT6) from Bos taurus (Bovine).